The chain runs to 252 residues: MLQIKSIPAFDDNYIWLIQNRDRDCAVVDPGSAEPVLAYLKQHDLNLKAVLITHHHHDHIGGVAELVHQFPEIHVVGPAQEPIPTLTHPVEDGDQIELFDERFMVLGLPGHTLGHIGYVGDGKLFCGDVLFSAGCGRVFEGTMEQMFSSLNKLLSLPEETQVYSAHEYTAANVAFALAVEPENEQLHIYRDEVSRLRAQNQPTLPTTLGREKWVNPFLRTQEPSVIRSVASQVSTLDPLTIFTALREWKNEF.

Positions 54, 56, 58, 59, 111, 128, and 166 each coordinate Zn(2+).

It belongs to the metallo-beta-lactamase superfamily. Glyoxalase II family. Monomer. Requires Zn(2+) as cofactor.

The enzyme catalyses an S-(2-hydroxyacyl)glutathione + H2O = a 2-hydroxy carboxylate + glutathione + H(+). Its pathway is secondary metabolite metabolism; methylglyoxal degradation; (R)-lactate from methylglyoxal: step 2/2. In terms of biological role, thiolesterase that catalyzes the hydrolysis of S-D-lactoyl-glutathione to form glutathione and D-lactic acid. The protein is Hydroxyacylglutathione hydrolase of Vibrio cholerae serotype O1 (strain ATCC 39541 / Classical Ogawa 395 / O395).